The following is a 47-amino-acid chain: Gas vesicle protein A (47 aa).

The protein belongs to the gas vesicle GvpA family. As to quaternary structure, the gas vesicle shell is 2 nm thick and consists of a single layer of this protein. It forms helical ribs nearly perpendicular to the long axis of the vesicle.

It is found in the gas vesicle shell. Its function is as follows. Gas vesicles are hollow, gas filled proteinaceous nanostructures found in some microorganisms. During planktonic growth they allow positioning of the organism at a favorable depth for light or nutrient acquisition. GvpA forms the protein shell. This is Gas vesicle protein A from Dactylococcopsis salina (Myxobaktron salinum).